A 976-amino-acid polypeptide reads, in one-letter code: Probable alanine--tRNA ligase, chloroplastic/mitochondrial (976 aa).

The N-terminal 54 residues, 1–54 (MPRPGFAHATAPALAHARARISPVARRRVVVMRTRVDGAAKSLVTQLRLALGST), are a transit peptide targeting the chloroplast and mitochondrion. Residues 71–95 (LGTATNDQSTGTRANPNAEGKDNSG) form a disordered region. The span at 73 to 85 (TATNDQSTGTRAN) shows a compositional bias: polar residues.

Belongs to the class-II aminoacyl-tRNA synthetase family. As to quaternary structure, monomer. It depends on Zn(2+) as a cofactor.

Its subcellular location is the plastid. It is found in the chloroplast. The protein localises to the mitochondrion. The enzyme catalyses tRNA(Ala) + L-alanine + ATP = L-alanyl-tRNA(Ala) + AMP + diphosphate. Its function is as follows. Catalyzes the attachment of alanine to tRNA(Ala) in a two-step reaction: alanine is first activated by ATP to form Ala-AMP and then transferred to the acceptor end of tRNA(Ala). Also edits incorrectly charged tRNA(Ala) via its editing domain. The chain is Probable alanine--tRNA ligase, chloroplastic/mitochondrial from Ostreococcus tauri.